Reading from the N-terminus, the 470-residue chain is Pre-mycofactocin glycosyltransferase (470 aa).

The helical transmembrane segment at 315-335 (LVISGGALMAWILMSIGTGLG) threads the bilayer.

This sequence belongs to the glycosyltransferase 2 family.

It localises to the cell membrane. Its function is as follows. Involved in the biosynthesis of the enzyme cofactor mycofactocin (MFT). Acts as a glycosyltransferase that catalyzes the oligoglycosylation of pre-mycofactocin (PMFT), adding up to nine beta-1,4-linked glucose residues. Is required for the in vivo ethanol assimilation in M.smegmatis. The polypeptide is Pre-mycofactocin glycosyltransferase (mftF) (Mycobacterium tuberculosis (strain CDC 1551 / Oshkosh)).